The chain runs to 228 residues: Ribonuclease 3 1 (228 aa).

One can recognise an RNase III domain in the interval 1-124; that stretch reads MYKLLMFRDD…VIGAYYLDNN (124 aa). Glu37 is a binding site for Mg(2+). Asp41 is an active-site residue. The Mg(2+) site is built by Ser110 and Glu113. Residue Glu113 is part of the active site. One can recognise a DRBM domain in the interval 153–223; that stretch reads DSKNRFQEWV…AENALANLNK (71 aa).

Belongs to the ribonuclease III family. As to quaternary structure, homodimer. Mg(2+) is required as a cofactor.

It is found in the cytoplasm. It carries out the reaction Endonucleolytic cleavage to 5'-phosphomonoester.. Its function is as follows. Digests double-stranded RNA. Involved in the processing of primary rRNA transcript to yield the immediate precursors to the large and small rRNAs (23S and 16S). Processes some mRNAs, and tRNAs when they are encoded in the rRNA operon. Processes pre-crRNA and tracrRNA of type II CRISPR loci if present in the organism. This is Ribonuclease 3 1 from Nostoc sp. (strain PCC 7120 / SAG 25.82 / UTEX 2576).